Reading from the N-terminus, the 108-residue chain is Nucleoid-associated protein BH02310 (108 aa).

This sequence belongs to the YbaB/EbfC family. As to quaternary structure, homodimer.

The protein localises to the cytoplasm. It localises to the nucleoid. Its function is as follows. Binds to DNA and alters its conformation. May be involved in regulation of gene expression, nucleoid organization and DNA protection. This chain is Nucleoid-associated protein BH02310, found in Bartonella henselae (strain ATCC 49882 / DSM 28221 / CCUG 30454 / Houston 1) (Rochalimaea henselae).